The primary structure comprises 141 residues: Nucleoside diphosphate kinase (141 aa).

Residues K11, F59, R87, T93, R104, and N114 each contribute to the ATP site. The Pros-phosphohistidine intermediate role is filled by H117.

This sequence belongs to the NDK family. In terms of assembly, homotetramer. The cofactor is Mg(2+).

It is found in the cytoplasm. It catalyses the reaction a 2'-deoxyribonucleoside 5'-diphosphate + ATP = a 2'-deoxyribonucleoside 5'-triphosphate + ADP. The enzyme catalyses a ribonucleoside 5'-diphosphate + ATP = a ribonucleoside 5'-triphosphate + ADP. In terms of biological role, major role in the synthesis of nucleoside triphosphates other than ATP. The ATP gamma phosphate is transferred to the NDP beta phosphate via a ping-pong mechanism, using a phosphorylated active-site intermediate. This Halorhodospira halophila (strain DSM 244 / SL1) (Ectothiorhodospira halophila (strain DSM 244 / SL1)) protein is Nucleoside diphosphate kinase.